The sequence spans 180 residues: ATP synthase subunit b, plastid (180 aa).

A helical membrane pass occupies residues 27–49 (LVTTLINIAVVLSLLIVFGKGFL).

The protein belongs to the ATPase B chain family. F-type ATPases have 2 components, F(1) - the catalytic core - and F(0) - the membrane proton channel. F(1) has five subunits: alpha(3), beta(3), gamma(1), delta(1), epsilon(1). F(0) has four main subunits: a(1), b(1), b'(1) and c(10-14). The alpha and beta chains form an alternating ring which encloses part of the gamma chain. F(1) is attached to F(0) by a central stalk formed by the gamma and epsilon chains, while a peripheral stalk is formed by the delta, b and b' chains.

It localises to the plastid membrane. Functionally, f(1)F(0) ATP synthase produces ATP from ADP in the presence of a proton or sodium gradient. F-type ATPases consist of two structural domains, F(1) containing the extramembraneous catalytic core and F(0) containing the membrane proton channel, linked together by a central stalk and a peripheral stalk. During catalysis, ATP synthesis in the catalytic domain of F(1) is coupled via a rotary mechanism of the central stalk subunits to proton translocation. Component of the F(0) channel, it forms part of the peripheral stalk, linking F(1) to F(0). This chain is ATP synthase subunit b, plastid, found in Cuscuta gronovii (Common dodder).